The sequence spans 137 residues: Acidic phospholipase A2 beta-bungarotoxin A6 chain (137 aa).

The signal sequence occupies residues 1 to 9; it reads AVCVSLLGA. The propeptide occupies 10–17; it reads ANIPPQHL. 6 disulfides stabilise this stretch: Cys-44/Cys-136, Cys-46/Cys-62, Cys-61/Cys-117, Cys-68/Cys-110, Cys-78/Cys-103, and Cys-96/Cys-108. 3 residues coordinate Ca(2+): Tyr-45, Gly-47, and Gly-49. His-65 is a catalytic residue. Asp-66 lines the Ca(2+) pocket. The active site involves Asp-111.

This sequence belongs to the phospholipase A2 family. Group I subfamily. D49 sub-subfamily. In terms of assembly, heterodimer; disulfide-linked. The A chains have phospholipase A2 activity and the B chains show homology with the basic protease inhibitors. The cofactor is Ca(2+). As to expression, expressed by the venom gland.

It is found in the secreted. The enzyme catalyses a 1,2-diacyl-sn-glycero-3-phosphocholine + H2O = a 1-acyl-sn-glycero-3-phosphocholine + a fatty acid + H(+). Functionally, snake venom phospholipase A2 (PLA2) that inhibits neuromuscular transmission by blocking acetylcholine release from the nerve termini. PLA2 catalyzes the calcium-dependent hydrolysis of the 2-acyl groups in 3-sn-phosphoglycerides. This Bungarus multicinctus (Many-banded krait) protein is Acidic phospholipase A2 beta-bungarotoxin A6 chain.